A 179-amino-acid polypeptide reads, in one-letter code: UPF0316 protein BH0621 (179 aa).

The next 3 helical transmembrane spans lie at 9-29, 41-61, and 67-87; these read ALTMILIILIINVVYVTLFTV, LAATVSMIEIIVYVLGLSLVL, and IENLIAYAVGYGIGVITGMKV.

The protein belongs to the UPF0316 family.

Its subcellular location is the cell membrane. In Halalkalibacterium halodurans (strain ATCC BAA-125 / DSM 18197 / FERM 7344 / JCM 9153 / C-125) (Bacillus halodurans), this protein is UPF0316 protein BH0621.